The primary structure comprises 487 residues: Probable peptidoglycan glycosyltransferase FtsW (487 aa).

9 consecutive transmembrane segments (helical) span residues Val-30–Ala-50, Ile-71–Trp-91, Thr-93–Gly-113, Trp-122–Cys-142, Val-167–Val-187, Leu-203–Phe-223, Phe-282–Leu-302, Ile-332–Pro-352, and Phe-358–Leu-378. Disordered stretches follow at residues Lys-398–Lys-419 and Ile-444–Val-487. The span at Ala-401–Ser-416 shows a compositional bias: polar residues. A compositionally biased stretch (acidic residues) spans Ile-444 to Gln-453.

Belongs to the SEDS family. FtsW subfamily.

It is found in the cell inner membrane. The catalysed reaction is [GlcNAc-(1-&gt;4)-Mur2Ac(oyl-L-Ala-gamma-D-Glu-L-Lys-D-Ala-D-Ala)](n)-di-trans,octa-cis-undecaprenyl diphosphate + beta-D-GlcNAc-(1-&gt;4)-Mur2Ac(oyl-L-Ala-gamma-D-Glu-L-Lys-D-Ala-D-Ala)-di-trans,octa-cis-undecaprenyl diphosphate = [GlcNAc-(1-&gt;4)-Mur2Ac(oyl-L-Ala-gamma-D-Glu-L-Lys-D-Ala-D-Ala)](n+1)-di-trans,octa-cis-undecaprenyl diphosphate + di-trans,octa-cis-undecaprenyl diphosphate + H(+). It functions in the pathway cell wall biogenesis; peptidoglycan biosynthesis. Functionally, peptidoglycan polymerase that is essential for cell division. The chain is Probable peptidoglycan glycosyltransferase FtsW from Pseudoalteromonas atlantica (strain T6c / ATCC BAA-1087).